A 354-amino-acid chain; its full sequence is Chorismate synthase (354 aa).

The NADP(+) site is built by Arg48 and Arg54. FMN-binding positions include 125–127 (RSS), 238–239 (NA), Gly278, 293–297 (KPTSS), and Arg319.

The protein belongs to the chorismate synthase family. As to quaternary structure, homotetramer. FMNH2 is required as a cofactor.

The catalysed reaction is 5-O-(1-carboxyvinyl)-3-phosphoshikimate = chorismate + phosphate. It participates in metabolic intermediate biosynthesis; chorismate biosynthesis; chorismate from D-erythrose 4-phosphate and phosphoenolpyruvate: step 7/7. Its function is as follows. Catalyzes the anti-1,4-elimination of the C-3 phosphate and the C-6 proR hydrogen from 5-enolpyruvylshikimate-3-phosphate (EPSP) to yield chorismate, which is the branch point compound that serves as the starting substrate for the three terminal pathways of aromatic amino acid biosynthesis. This reaction introduces a second double bond into the aromatic ring system. The polypeptide is Chorismate synthase (Blochmanniella pennsylvanica (strain BPEN)).